The primary structure comprises 162 residues: Caveolin-2 (162 aa).

The Cytoplasmic segment spans residues 1 to 86 (MGLETEKADV…FEISKYIIYK (86 aa)). At Tyr-19 the chain carries Phosphotyrosine; by SRC. Ser-20 and Ser-23 each carry phosphoserine. Tyr-27 bears the Phosphotyrosine; by SRC mark. An intramembrane region (helical) is located at residues 87-107 (FLTVFLAIPLAFAAGILFATL). Residues 108–162 (SCLHIWITMPFVKTCLMVLPSVQTIWKSVTDVAIAPLCTSVGRSFSSVSLQLSHD) are Cytoplasmic-facing.

This sequence belongs to the caveolin family. In terms of assembly, monomer or homodimer. Interacts with CAV1; the interaction forms a stable heterooligomeric complex that is required for targeting to lipid rafts and for caveolae formation. Tyrosine phosphorylated forms do not form heterooligomers with the Tyr-19-phosphorylated form existing as a monomer or dimer, and the Tyr-27-form as a monomer only. Interacts (tyrosine phosphorylated form) with the SH2 domain-containing proteins, RASA1, NCK1 and SRC. Interacts (tyrosine phosphorylated form) with INSR, the interaction (Tyr-27-phosphorylated form) is increased on insulin stimulation. Interacts (Tyr-19 phosphorylated form) with MAPK1 (phosphorylated form); the interaction, promoted by insulin, leads to nuclear location and MAPK1 activation. Interacts with STAT3; the interaction is increased on insulin-induced tyrosine phosphorylation leading to STAT activation. Phosphorylated on serine and tyrosine residues. CAV1 promotes phosphorylation on Ser-23 which then targets the complex to the plasma membrane, lipid rafts and caveolae. Phosphorylation on both Tyr-19 and Tyr-27 is required for insulin-induced 'Ser-727' phosphorylation of STAT3 and its activation. Phosphorylation on Tyr-19 is required for insulin-induced phosphorylation of MAPK1 and DNA binding of STAT3. Tyrosine phosphorylation is induced by both EGF and insulin.

Its subcellular location is the nucleus. The protein resides in the cytoplasm. It is found in the golgi apparatus membrane. It localises to the cell membrane. The protein localises to the membrane. Its subcellular location is the caveola. May act as a scaffolding protein within caveolar membranes. Interacts directly with G-protein alpha subunits and can functionally regulate their activity. Acts as an accessory protein in conjunction with CAV1 in targeting to lipid rafts and driving caveolae formation. Positive regulator of cellular mitogenesis of the MAPK signaling pathway. Required for the insulin-stimulated nuclear translocation and activation of MAPK1 and STAT3, and the subsequent regulation of cell cycle progression. This chain is Caveolin-2 (CAV2), found in Dasypus novemcinctus (Nine-banded armadillo).